Reading from the N-terminus, the 74-residue chain is Small heat shock protein hspG10 (74 aa).

Positions 31 to 74 (KTIIDILPSMDVTMTNDKLIIETELAGISKDHIEIDIKDSILTI) constitute a sHSP domain.

It belongs to the small heat shock protein (HSP20) family.

The sequence is that of Small heat shock protein hspG10 (hspG10) from Dictyostelium discoideum (Social amoeba).